Reading from the N-terminus, the 352-residue chain is Beta-methylmalyl-CoA dehydratase (352 aa).

Residues 16–129 (LGQTIVHATP…GKTGVVYVHS (114 aa)) form the MaoC-like domain. Substrate is bound by residues 62–65 (PIDS), 85–88 (IANL), and 96–98 (GAV).

Homodimer.

It carries out the reaction (2R,3S)-beta-methylmalyl-CoA = 2-methylfumaryl-CoA + H2O. In terms of biological role, involved in the glyoxylate assimilation cycle used to regenerate acetyl-CoA and produce pyruvate as universal precursor for biosynthesis. Catalyzes the reversible dehydration of beta-methylmalyl-CoA ((2R,3S)-beta-methylmalyl-CoA) to yield mesaconyl-CoA (2-methylfumaryl-CoA). This chain is Beta-methylmalyl-CoA dehydratase (mch), found in Chloroflexus aurantiacus (strain ATCC 29366 / DSM 635 / J-10-fl).